The sequence spans 277 residues: Caspase-3 (277 aa).

Met-1 is modified (N-acetylmethionine). 2 propeptides span residues 1–9 and 10–28; these read MDNNETSVD and SKSI…KSMD. An N6-acetyllysine modification is found at Lys-11. Ser-26 is subject to Phosphoserine. Active-site residues include His-121 and Cys-163. Cys-163 carries the post-translational modification S-nitrosocysteine; in inhibited form.

Belongs to the peptidase C14A family. In terms of assembly, heterotetramer that consists of two anti-parallel arranged heterodimers, each one formed by a 17 kDa (p17) and a 12 kDa (p12) subunit. Interacts with BIRC6/bruce. In terms of processing, cleavage by granzyme B, caspase-6, caspase-8 and caspase-10 generates the two active subunits. Additional processing of the propeptides is likely due to the autocatalytic activity of the activated protease. Active heterodimers between the small subunit of caspase-7 protease and the large subunit of caspase-3 also occur and vice versa. Post-translationally, S-nitrosylated on its catalytic site cysteine in unstimulated cell lines and denitrosylated upon activation of the Fas apoptotic pathway, associated with an increase in intracellular caspase activity. Fas therefore activates caspase-3 not only by inducing the cleavage of the caspase zymogen to its active subunits, but also by stimulating the denitrosylation of its active site thiol. Ubiquitinated by BIRC6; this activity is inhibited by DIABLO/SMAC. In terms of tissue distribution, expressed in heart, brain, liver, and muscle but not in kidney or testis.

The protein resides in the cytoplasm. It carries out the reaction Strict requirement for an Asp residue at positions P1 and P4. It has a preferred cleavage sequence of Asp-Xaa-Xaa-Asp-|- with a hydrophobic amino-acid residue at P2 and a hydrophilic amino-acid residue at P3, although Val or Ala are also accepted at this position.. Inhibited by BIRC6; following inhibition of BIRC6-caspase binding by DIABLO/SMAC, BIRC6 is subjected to caspase cleavage, leading to an increase in active caspases. Functionally, involved in the activation cascade of caspases responsible for apoptosis execution. At the onset of apoptosis, it proteolytically cleaves poly(ADP-ribose) polymerase PARP1 at a '216-Asp-|-Gly-217' bond. Cleaves and activates sterol regulatory element binding proteins (SREBPs) between the basic helix-loop-helix leucine zipper domain and the membrane attachment domain. Cleaves and activates caspase-6, -7 and -9 (CASP6, CASP7 and CASP9, respectively). Cleaves and inactivates interleukin-18 (IL18). Triggers cell adhesion in sympathetic neurons through RET cleavage. Cleaves IL-1 beta between an Asp and an Ala, releasing the mature cytokine which is involved in a variety of inflammatory processes. Cleaves and inhibits serine/threonine-protein kinase AKT1 in response to oxidative stress. Acts as an inhibitor of type I interferon production during virus-induced apoptosis by mediating cleavage of antiviral proteins CGAS, IRF3 and MAVS, thereby preventing cytokine overproduction. Also involved in pyroptosis by mediating cleavage and activation of gasdermin-E (GSDME). Cleaves XRCC4 and phospholipid scramblase proteins XKR4, XKR8 and XKR9, leading to promote phosphatidylserine exposure on apoptotic cell surface. Cleaves BIRC6 following inhibition of BIRC6-caspase binding by DIABLO/SMAC. The polypeptide is Caspase-3 (Casp3) (Rattus norvegicus (Rat)).